Here is a 335-residue protein sequence, read N- to C-terminus: Glyceraldehyde-3-phosphate dehydrogenase (335 aa).

Residues 11–12 (RI), Asp33, and Lys78 each bind NAD(+). D-glyceraldehyde 3-phosphate contacts are provided by residues 148–150 (SST), Thr179, 208–209 (TG), and Arg231. Asn313 lines the NAD(+) pocket.

It belongs to the glyceraldehyde-3-phosphate dehydrogenase family. As to quaternary structure, homotetramer.

It localises to the cytoplasm. The enzyme catalyses D-glyceraldehyde 3-phosphate + phosphate + NAD(+) = (2R)-3-phospho-glyceroyl phosphate + NADH + H(+). The protein operates within carbohydrate degradation; glycolysis; pyruvate from D-glyceraldehyde 3-phosphate: step 1/5. The sequence is that of Glyceraldehyde-3-phosphate dehydrogenase (GPD) from Pleurotus sajor-caju (Oyster mushroom).